The following is a 159-amino-acid chain: MSAVLAPTVRIQRQDFDVAAEIAALTQGRADVGAVVSFSGLCRDEQGALSALELEHYPGMAEAEIGRIAAEAVERWPLQGLTVIHRHGKIRPGENIVLVVAASAHRQAAFEAANFLMDYLKSRAPFWKKEHRTDGSEGGWVEAKETDTQAAKRWKSSSE.

Substrate-binding positions include Leu41–Arg43, His105–Arg106, Lys121, and Lys128–Glu130. Residues Glu130–Glu159 are disordered.

This sequence belongs to the MoaE family. Heterotetramer of 2 MoaD subunits and 2 MoaE subunits. Also stable as homodimer. The enzyme changes between these two forms during catalysis.

It carries out the reaction 2 [molybdopterin-synthase sulfur-carrier protein]-C-terminal-Gly-aminoethanethioate + cyclic pyranopterin phosphate + H2O = molybdopterin + 2 [molybdopterin-synthase sulfur-carrier protein]-C-terminal Gly-Gly + 2 H(+). It participates in cofactor biosynthesis; molybdopterin biosynthesis. In terms of biological role, converts molybdopterin precursor Z into molybdopterin. This requires the incorporation of two sulfur atoms into precursor Z to generate a dithiolene group. The sulfur is provided by MoaD. In Mesorhizobium japonicum (strain LMG 29417 / CECT 9101 / MAFF 303099) (Mesorhizobium loti (strain MAFF 303099)), this protein is Molybdopterin synthase catalytic subunit (moaE).